Consider the following 202-residue polypeptide: UPF0056 membrane protein PH0214 (202 aa).

A run of 6 helical transmembrane segments spans residues 5 to 25 (ILSSALLMLIMIDPSDKILLV), 47 to 67 (IGFILLLLFAVAGKIILQDIF), 76 to 96 (VAGGFVLFKIGLEALEGGGMV), 104 to 124 (ILALAAVPVATPLIAGPAAIT), 135 to 155 (IIVSIVGTLIAIAITAALMMI), and 174 to 194 (IIGLFIMAIGAQMMITGAGGI).

Belongs to the UPF0056 (MarC) family.

Its subcellular location is the cell membrane. The chain is UPF0056 membrane protein PH0214 from Pyrococcus horikoshii (strain ATCC 700860 / DSM 12428 / JCM 9974 / NBRC 100139 / OT-3).